The sequence spans 25 residues: Caerin-1.17 (25 aa).

Leu25 is modified (leucine amide).

It belongs to the frog skin active peptide (FSAP) family. Caerin subfamily. Expressed by the skin dorsal glands.

The protein resides in the secreted. Caerin-1.17 shows significant activity against Gram-positive organisms, but is less effective against Gram-negative organisms. The polypeptide is Caerin-1.17 (Ranoidea gracilenta (Dainty green tree frog)).